The chain runs to 309 residues: MIKIYAPASIGNVGVGFDILGAAIIPINGSLLGDFVTVKLSNKFNLVNKGIFSNKLPKNTEQNIVWKCWLKFCNTIKRNIPVSIILEKNMPIGSGLGSSACSIVATLVAMNEFCDKPLNSKELLLLMGEVEGEISGSIHYDNVAPCYLGGLQLILEDSKIISQTIPNFKNWFWIVAWPGTKVPTAEARDILPKKYKKETCIKNSRYLAGFIHASYSQQPHLAARLMQDFIAEPYRIKLLPNYLYVKEKIKKIGAISSGISGSGPTIFSISDNINTAQKISAWLTENYLQNTTGFVHICFLDSKGVRKIG.

P91–C101 contacts ATP.

Belongs to the GHMP kinase family. Homoserine kinase subfamily.

The protein resides in the cytoplasm. The catalysed reaction is L-homoserine + ATP = O-phospho-L-homoserine + ADP + H(+). It participates in amino-acid biosynthesis; L-threonine biosynthesis; L-threonine from L-aspartate: step 4/5. Catalyzes the ATP-dependent phosphorylation of L-homoserine to L-homoserine phosphate. The protein is Homoserine kinase of Buchnera aphidicola subsp. Acyrthosiphon pisum (strain 5A).